A 263-amino-acid chain; its full sequence is MEKRIELERRARKANQIQELNLDNCRSTSIVGLTDEYTALESLSLINVGLTTLKGFPKLPNLKKLELSDNRISSGLNYLTTSPKLQYLNLSGNKIKDLETLKPLEEFKSLAVLDLFNNDATQVDNYREKIFKMLPSLNFLDGFDCNDEEAQSEGDDDEEVNGNDSEEEVSGDDDEEDGDSDDSDEDGDNGEVSLSEVYNDDLEEDNSDWEEGEGGGDDDEEDSDIDDADGEANESSASLNASKKEPEKTDESQARGKKRKHDG.

LRR repeat units follow at residues 16–37 (QIQELNLDNCRSTSIVGLTDEY), 39–60 (ALESLSLINVGLTTLKGFPKLP), 61–83 (NLKKLELSDNRISSGLNYLTTSP), and 84–105 (KLQYLNLSGNKIKDLETLKPLE). One can recognise an LRRCT domain in the interval 118 to 156 (NDATQVDNYREKIFKMLPSLNFLDGFDCNDEEAQSEGDD). 2 stretches are compositionally biased toward acidic residues: residues 144–189 (DCND…DGDN) and 198–232 (YNDDLEEDNSDWEEGEGGGDDDEEDSDIDDADGEA). A disordered region spans residues 144-263 (DCNDEEAQSE…ARGKKRKHDG (120 aa)). Residues 242-254 (SKKEPEKTDESQA) are compositionally biased toward basic and acidic residues.

The protein belongs to the ANP32 family. In terms of processing, phosphorylated on serine residues.

The protein resides in the nucleus. It is found in the cytoplasm. Implicated in a number of cellular processes, including proliferation, differentiation, caspase-dependent and caspase-independent apoptosis, suppression of transformation (tumor suppressor), inhibition of protein phosphatase 2A, regulation of mRNA trafficking and stability, and inhibition of acetyltransferases as part of the INHAT (inhibitor of histone acetyltransferases) complex. The sequence is that of Acidic leucine-rich nuclear phosphoprotein 32 family member A (Anp32a) from Drosophila pseudoobscura pseudoobscura (Fruit fly).